We begin with the raw amino-acid sequence, 211 residues long: Large ribosomal subunit protein bL25 (211 aa).

Positions 188–211 (HREEEKAPEETGEAAPAPTPETGQ) are disordered. Residues 200-211 (EAAPAPTPETGQ) show a composition bias toward low complexity.

This sequence belongs to the bacterial ribosomal protein bL25 family. CTC subfamily. Part of the 50S ribosomal subunit; part of the 5S rRNA/L5/L18/L25 subcomplex. Contacts the 5S rRNA. Binds to the 5S rRNA independently of L5 and L18.

In terms of biological role, this is one of the proteins that binds to the 5S RNA in the ribosome where it forms part of the central protuberance. This is Large ribosomal subunit protein bL25 from Desulforudis audaxviator (strain MP104C).